The following is a 76-amino-acid chain: Translation initiation factor IF-1 (76 aa).

Residues 1–72 (MAKKDVVVMQ…NKGRIVKREK (72 aa)) form the S1-like domain.

The protein belongs to the IF-1 family. As to quaternary structure, component of the 30S ribosomal translation pre-initiation complex which assembles on the 30S ribosome in the order IF-2 and IF-3, IF-1 and N-formylmethionyl-tRNA(fMet); mRNA recruitment can occur at any time during PIC assembly.

It is found in the cytoplasm. Its function is as follows. One of the essential components for the initiation of protein synthesis. Stabilizes the binding of IF-2 and IF-3 on the 30S subunit to which N-formylmethionyl-tRNA(fMet) subsequently binds. Helps modulate mRNA selection, yielding the 30S pre-initiation complex (PIC). Upon addition of the 50S ribosomal subunit IF-1, IF-2 and IF-3 are released leaving the mature 70S translation initiation complex. This is Translation initiation factor IF-1 from Petrotoga mobilis (strain DSM 10674 / SJ95).